An 86-amino-acid chain; its full sequence is MDEQHYVYILRCRDQSLYTGYTNNLEHRLQMHETGKGAKYTRGRGPFEVLYVKKFINKSEAMQEEYRIKQLPRFEKLKLIEFQEQE.

The region spanning 3–80 (EQHYVYILRC…LPRFEKLKLI (78 aa)) is the GIY-YIG domain.

This sequence belongs to the UPF0213 family.

In Oceanobacillus iheyensis (strain DSM 14371 / CIP 107618 / JCM 11309 / KCTC 3954 / HTE831), this protein is UPF0213 protein OB0043.